Here is a 341-residue protein sequence, read N- to C-terminus: Uroporphyrinogen decarboxylase (341 aa).

Residues 23–27 (RQAGR), Asp-73, Tyr-148, Ser-203, and His-318 contribute to the substrate site.

Belongs to the uroporphyrinogen decarboxylase family. In terms of assembly, homodimer.

The protein resides in the cytoplasm. The catalysed reaction is uroporphyrinogen III + 4 H(+) = coproporphyrinogen III + 4 CO2. Its pathway is porphyrin-containing compound metabolism; protoporphyrin-IX biosynthesis; coproporphyrinogen-III from 5-aminolevulinate: step 4/4. Catalyzes the decarboxylation of four acetate groups of uroporphyrinogen-III to yield coproporphyrinogen-III. The polypeptide is Uroporphyrinogen decarboxylase (Brucella ovis (strain ATCC 25840 / 63/290 / NCTC 10512)).